The following is a 233-amino-acid chain: Uridylate kinase (233 aa).

7-10 (KISG) contacts ATP. G49 provides a ligand contact to UMP. Residues G50 and R54 each contribute to the ATP site. UMP contacts are provided by residues D68 and 129–136 (TGNPFFTT). ATP contacts are provided by T156, Y162, and D165.

The protein belongs to the UMP kinase family. As to quaternary structure, homohexamer.

The protein localises to the cytoplasm. The enzyme catalyses UMP + ATP = UDP + ADP. Its pathway is pyrimidine metabolism; CTP biosynthesis via de novo pathway; UDP from UMP (UMPK route): step 1/1. Inhibited by UTP. Functionally, catalyzes the reversible phosphorylation of UMP to UDP. The protein is Uridylate kinase of Neorickettsia sennetsu (strain ATCC VR-367 / Miyayama) (Ehrlichia sennetsu).